An 805-amino-acid chain; its full sequence is MVVIHGVSLTPRFTLPSRPLNTGFNAGNSTLSFFFKKHPLSRKIFAGKQSAEFDSSSQAISASEKVLVPDNLDDDPRGFSQIFDLESQTMEYTEAVRTEDQTMNVVKERGVKPRIVPPPGDGKKIYEIDPMLRTYNNHLDYRYGQYKRLREEIDKYEGGLEAFSRGYEKLGFSRSDAGITYREWAPGAKAASLIGDFNNWNSNADIMTRNEFGVWEIFLPNNTDGSPAIPHGSRVKIRMDTPSGIKDSIPAWIKFSVQAPGEIPFNGIYYDPPEEEKYVFKHPQPKRPKSLRIYEAHVGMSSTEPMVNTYANFRDDVLPRIKKLGYNAVQIMAIQEHSYYASFGYHVTNFFAPSSRCGTPEELKSLIDRAHELGLVVLMDIVHSHASKNTLDGLNMFDGTDAHYFHSGPRGYHWMWDSRLFNYGSWEVLRYLLSNARWWLEEYKFDGFRFDGVTSMMYTHHGLSVGFTGNYTEYFGLETDVDAVNYLMLVNDMIHGLYPEAITVGEDVSGMPTFCIPVQDGGVGFDYRLHMAIADKWIEMLKKRDEDWQMGDIIYTLTNRRWSEKCISYAESHDQALVGDKTIAFWLMDKDMYDFMAVDRPSTPLIDRGIALHKMIRLITMGLGGEGYLNFMGNEFGHPEWIDFPRGEQRLSDGSVIPGNNFSYDKCRRRFDLGDADYLRYRGLQEFDQAMQHLEENYGFMTSEHQFISRKDEADRVIVFERGDLVFVFNFHWTSSYFDYRIGCSKPGKYKIVLDSDDPLFGGFNRLDRKAEYFTYDGLYDERPCSFMVYAPCRTAVVYALANHD.

The transit peptide at 1–32 directs the protein to the chloroplast; it reads MVVIHGVSLTPRFTLPSRPLNTGFNAGNSTLS. Catalysis depends on Asp451, which acts as the Nucleophile. Glu506 serves as the catalytic Proton donor.

It belongs to the glycosyl hydrolase 13 family. GlgB subfamily. As to quaternary structure, monomer. Expressed in seedlings, roots, stems, leaves, inflorescences, seeds and flowers.

The protein resides in the plastid. The protein localises to the chloroplast stroma. Its subcellular location is the amyloplast. It carries out the reaction Transfers a segment of a (1-&gt;4)-alpha-D-glucan chain to a primary hydroxy group in a similar glucan chain.. The protein operates within glycan biosynthesis; starch biosynthesis. Catalyzes the formation of the alpha-1,6-glucosidic linkages in starch by scission of a 1,4-alpha-linked oligosaccharide from growing alpha-1,4-glucan chains and the subsequent attachment of the oligosaccharide to the alpha-1,6 position. The chain is 1,4-alpha-glucan-branching enzyme 2-2, chloroplastic/amyloplastic (SBE2.2) from Arabidopsis thaliana (Mouse-ear cress).